Reading from the N-terminus, the 228-residue chain is Glycerol-3-phosphate acyltransferase (228 aa).

Transmembrane regions (helical) follow at residues 1–21, 56–76, 104–124, 136–156, 161–181, and 183–203; these read MINW…LGAT, VPAL…IALV, MVII…WIGF, ILLA…IVVL, IVSL…FFTG, and PLPY…RHIS.

Belongs to the PlsY family. As to quaternary structure, probably interacts with PlsX.

It is found in the cell inner membrane. It carries out the reaction an acyl phosphate + sn-glycerol 3-phosphate = a 1-acyl-sn-glycero-3-phosphate + phosphate. The protein operates within lipid metabolism; phospholipid metabolism. Its function is as follows. Catalyzes the transfer of an acyl group from acyl-phosphate (acyl-PO(4)) to glycerol-3-phosphate (G3P) to form lysophosphatidic acid (LPA). This enzyme utilizes acyl-phosphate as fatty acyl donor, but not acyl-CoA or acyl-ACP. This Trichodesmium erythraeum (strain IMS101) protein is Glycerol-3-phosphate acyltransferase.